A 1513-amino-acid polypeptide reads, in one-letter code: Mucin-2 (1513 aa).

The first 20 residues, 1–20 (MGLPLARLVAVCLVLALAKG), serve as a signal peptide directing secretion. One can recognise a VWFD 1 domain in the interval 32–204 (HVCSTWGDFH…KINKPEVVCE (173 aa)). 28 disulfide bridges follow: cysteine 34-cysteine 166, cysteine 56-cysteine 203, cysteine 64-cysteine 163, cysteine 215-cysteine 252, cysteine 222-cysteine 247, cysteine 234-cysteine 272, cysteine 254-cysteine 260, cysteine 262-cysteine 288, cysteine 292-cysteine 326, cysteine 309-cysteine 348, cysteine 328-cysteine 342, cysteine 350-cysteine 372, cysteine 367-cysteine 384, cysteine 370-cysteine 379, cysteine 388-cysteine 525, cysteine 410-cysteine 560, cysteine 432-cysteine 440, cysteine 571-cysteine 616, cysteine 585-cysteine 611, cysteine 598-cysteine 636, cysteine 618-cysteine 624, cysteine 626-cysteine 651, cysteine 658-cysteine 695, cysteine 671-cysteine 685, cysteine 675-cysteine 715, cysteine 697-cysteine 709, cysteine 717-cysteine 739, and cysteine 737-cysteine 746. Aspartate 46 lines the Ca(2+) pocket. Cu(+)-binding residues include methionine 143 and methionine 151. Glutamate 153 contributes to the Cu(2+) binding site. An N-linked (GlcNAc...) asparagine glycan is attached at asparagine 160. Residues aspartate 168, asparagine 170, and glutamate 177 each contribute to the Ca(2+) site. Residues histidine 274 and histidine 321 each contribute to the Cu(2+) site. Residues 292–348 (CPGNMVYLESGSPWLDTCSHLEVSSLCEEHYMDGCFCPEGTVYDDITGSGCIPVSQC) enclose the TIL domain. Residue methionine 323 coordinates Cu(+). The VWFC domain occupies 350 to 410 (CKLHGHLYMP…GKKFTFHGDC (61 aa)). The VWFD 2 domain maps to 386–561 (ETCALEGGSH…NTWKAQSSCH (176 aa)). Ca(2+) is bound at residue aspartate 400. N-linked (GlcNAc...) asparagine glycosylation occurs at asparagine 420. Positions 527, 529, 531, 534, and 535 each coordinate Ca(2+). Asparagine 667 is a glycosylation site (N-linked (GlcNAc...) asparagine). Asparagine 767 carries N-linked (GlcNAc...) asparagine glycosylation. Intrachain disulfides connect cysteine 781-cysteine 817, cysteine 799-cysteine 811, cysteine 819-cysteine 842, cysteine 836-cysteine 854, cysteine 840-cysteine 849, cysteine 858-cysteine 989, cysteine 880-cysteine 1024, cysteine 889-cysteine 986, cysteine 906-cysteine 913, cysteine 1034-cysteine 1077, cysteine 1048-cysteine 1072, cysteine 1059-cysteine 1099, cysteine 1079-cysteine 1087, cysteine 1089-cysteine 1114, cysteine 1105-cysteine 1134, cysteine 1118-cysteine 1160, cysteine 1142-cysteine 1184, cysteine 1164-cysteine 1178, cysteine 1186-cysteine 1210, cysteine 1205-cysteine 1235, and cysteine 1208-cysteine 1218. The N-linked (GlcNAc...) asparagine glycan is linked to asparagine 837. A VWFD 3 domain is found at 856–1025 (STCSIYGSGH…NSWKEASTCP (170 aa)). Aspartate 870 contacts Ca(2+). N-linked (GlcNAc...) asparagine glycosylation is present at asparagine 892. Asparagine 991, aspartate 993, asparagine 998, and aspartate 999 together coordinate Ca(2+). Residues asparagine 1136 and asparagine 1151 are each glycosylated (N-linked (GlcNAc...) asparagine). 3 N-linked (GlcNAc...) asparagine glycosylation sites follow: asparagine 1212, asparagine 1227, and asparagine 1243. O-linked (GalNAc) threonine glycans are attached at residues threonine 1264, threonine 1267, threonine 1268, and threonine 1280. A glycan (O-linked (GalNAc) serine) is linked at serine 1286. Threonine 1290 carries O-linked (GalNAc) threonine glycosylation. Ca(2+) contacts are provided by asparagine 1303, histidine 1306, serine 1309, glycine 1313, aspartate 1314, and glutamate 1316. N-linked (GlcNAc...) asparagine glycosylation is present at asparagine 1350. Positions 1373 and 1374 each coordinate Ca(2+). Tandem repeats lie at residues 1392–1407 (SPTTSTPISSTPQPTS), 1408–1423 (SPTTLPTTSPLTSSAT), 1424–1434 (SPTTSHITSTV), 1435–1445 (SPTTSPTTSTT), 1446–1456 (SPTTSPTTSTT), 1457–1467 (SPTTSTTSPTP), 1468–1478 (SPTTSTTSPTP), 1479–1489 (SPTTSTTSPTP), 1490–1500 (SPTTSTTSPTT), 1501–1511 (SPITSPTTSTT), and 1512–1513 (SP). Positions 1392 to 1513 (SPTTSTPISS…TSPTTSTTSP (122 aa)) are approximate repeats. The segment at 1392–1513 (SPTTSTPISS…TSPTTSTTSP (122 aa)) is disordered.

As to quaternary structure, homomultimer; disulfide-linked. The N- and C-terminus mediate their assembly into higher order structures to form filaments. The CTCK domains of two polypeptides associate in the endoplasmic reticulum to generate intermolecularly disulfide-bonded dimers. These dimers progress to the Golgi apparatus, which is a more acidic environment than the endoplasmic reticulum. Under acidic conditions, the N-termini form non-covalent intermolecular interactions that juxtapose assemblies of the third VWD domain (VWD3) from different CTCK-linked dimers. The VWD3 assemblies then become disulfide bonded to one another to produce long, disulfide-linked polymers that remain highly compact until secretion. Interacts with FCGBP. Interacts with AGR2; disulfide-linked. In terms of processing, O-glycosylated. O-glycosylation is required for mucin assembly. Goblet cells synthesize two forms of mucin that differ in branched chain O-glycosylation and the site of production in the colon. May undergo proteolytic cleavage in the outer mucus layer of the colon, contributing to the expanded volume and loose nature of this layer which allows for bacterial colonization in contrast to the inner mucus layer which is dense and devoid of bacteria. Post-translationally, at low pH of 6 and under, undergoes autocatalytic cleavage in vitro in the N-terminal region of the fourth VWD domain. It is likely that this also occurs in vivo and is triggered by the low pH of the late secretory pathway. Expressed in intestine and airway.

It is found in the secreted. Its function is as follows. Coats the epithelia of the intestines and other mucus membrane-containing organs to provide a protective, lubricating barrier against particles and infectious agents at mucosal surfaces. Major constituent of the colon mucus, which is mainly formed by large polymeric networks of MUC2 secreted by goblet cells that cover the exposed surfaces of intestine. MUC2 networks form hydrogels that guard the underlying epithelium from pathogens and other hazardous matter entering from the outside world, while permitting nutrient absorption and gas exchange. Acts as a divalent copper chaperone that protects intestinal cells from copper toxicity and facilitates nutritional copper unptake into cells. Binds both Cu(2+) and its reduced form, Cu(1+), at two juxtaposed binding sites: Cu(2+), once reduced to Cu(1+) by vitamin C (ascorbate) or other dietary antioxidants, transits to the other binding site. MUC2-bound Cu(1+) is protected from oxidation in aerobic environments, and can be released for nutritional delivery to cells. Mucin gels store antimicrobial molecules that participate in innate immunity. Mucin glycoproteins also house and feed the microbiome, lubricate tissue surfaces, and may facilitate the removal of contaminants and waste products from the body. Goblet cells synthesize two forms of MUC2 mucin that differ in branched chain O-glycosylation and the site of production in the colon: a (1) 'thick' mucus that wraps the microbiota to form fecal pellets is produced in the proximal, ascending colon. 'Thick' mucus transits along the descending colon and is lubricated by a (2) 'thin' MUC2 mucus produced in the distal colon which adheres to the 'thick' mucus. This Rattus norvegicus (Rat) protein is Mucin-2.